The sequence spans 328 residues: Ferredoxin--NADP reductase 1 (328 aa).

Residues Glu37, Lys45, Tyr49, Val89, and Thr310 each contribute to the FAD site.

The protein belongs to the ferredoxin--NADP reductase type 2 family. As to quaternary structure, homodimer. Requires FAD as cofactor.

The catalysed reaction is 2 reduced [2Fe-2S]-[ferredoxin] + NADP(+) + H(+) = 2 oxidized [2Fe-2S]-[ferredoxin] + NADPH. The protein is Ferredoxin--NADP reductase 1 of Latilactobacillus sakei subsp. sakei (strain 23K) (Lactobacillus sakei subsp. sakei).